A 483-amino-acid chain; its full sequence is AP-3 complex subunit mu (483 aa).

Residues Asn-211–Arg-482 enclose the MHD domain.

Belongs to the adaptor complexes medium subunit family. In terms of assembly, adaptor protein complex 3 (AP-3) is a heterotetramer composed of 2 large adaptins (APL5 and APL6), a medium adaptin (APM3) and a small adaptin (APS3).

It localises to the golgi apparatus. Its subcellular location is the cytoplasmic vesicle membrane. Part of the AP-3 complex, an adaptor-related complex which is not clathrin-associated. The complex is associated with the Golgi region as well as more peripheral structures. It facilitates the budding of vesicles from the Golgi membrane and may be directly involved in trafficking to the vacuole. Required for the transport via the ALP pathway, which directs the transport of the cargo proteins PHO8 and VAM3 to the vacuole. This Saccharomyces cerevisiae (strain ATCC 204508 / S288c) (Baker's yeast) protein is AP-3 complex subunit mu (APM3).